Consider the following 665-residue polypeptide: SH3 domain-containing kinase-binding protein 1 (665 aa).

SH3 domains lie at 1–58 (MVEA…EIKK) and 98–157 (RRRR…ELSG). Residues S156, S159, S183, and S230 each carry the phosphoserine modification. Residues 159-200 (SDELGISQDEQLSKSSLRETTGSESDGGDSSSTKSEGANGTV) are disordered. The segment covering 177–195 (ETTGSESDGGDSSSTKSEG) has biased composition (low complexity). T254 carries the phosphothreonine modification. The SH3 3 domain occupies 267 to 328 (KSKDYCKVIF…PDNFVKLLPP (62 aa)). 2 disordered regions span residues 328 to 444 (PDFE…LAGS) and 467 to 610 (DSVV…AAVE). Positions 355–390 (TERKHEIKKIPPERPEMLPNRTEEKERPEREPKLDL) are enriched in basic and acidic residues. Residue S436 is modified to Phosphoserine. The span at 469–484 (VVSSTEKLSHPTTSRP) shows a compositional bias: polar residues. Positions 491–510 (PPSQSLTSSSLSSPDIFDSP) are enriched in low complexity. Phosphoserine is present on residues S509, S511, and S521. Basic and acidic residues predominate over residues 517–531 (EEHISLAHRGVDASK). Positions 535–546 (KTVTISQVSDNK) are enriched in polar residues. Over residues 564 to 582 (APLSSAAPSPLSSSLGTAG) the composition is skewed to low complexity. S587 bears the Phosphoserine mark. Residues 602 to 664 (AASSQAAVEE…VNDIKKALQS (63 aa)) adopt a coiled-coil conformation.

In terms of assembly, can self-associate and form homotetramers. Interacts with CD2, F-actin capping protein, PIK3R3, GRB2, EGFR, MET, BLNK, MAP3K4, PDCD6IP, SPRY2, ARHGAP17, ARHGAP27, MAGI2, CRK, BCAR1, SOS1, ASAP1, ARAP3, HIP1R, SYNJ2, INPP5D and STAP1. Interacts with E3 ubiquitin-protein ligases CBL and CBLB, but does not interact with CBLC. Two molecules of SH3KBP1 seem to bind through their respective SH3 1 domain to one molecule of CBLB. The interaction with CBL or CBLB and EGFR is increased upon EGF stimulation. The interaction with CBL is attenuated by PDCD6IP. Interacts (via SH3 domains) with ARAP1. The interaction is independent of EGF and does not affect ARAP1 GTPase-activating activity but is involved in regulating ubiquitination and endocytic trafficking of EGFR. ARAP1 competes with CBL for binding to SH3KBP1 and prevents interaction of CBL with SH3KBP1; this is likely to regulate SH3KBP1-mediated internalization of EGFR. Interacts through its proline-rich region with the SH3 domain of endophilins SH3GL1, SH3GL2 and SH3GL3. The SH3KBP1-endophilin complex seems to associate with a complex containing the phosphorylated receptor (EGFR or MET) and phosphorylated CBL. Probably associates with ASAP1 and phosphorylated EGFR. Probably part of a complex consisting of at least SH3KBP1, ASAP1 and ARAP3. Interacts with focal adhesion kinases PTK2/FAK1 and PTK2B/PYK2, probably as a dimer. Interacts with DAB2 and probably associates with chathrin through its interaction with DAB2. Part of a complex consisting of SH3KBP1, DAB2, and clathrin heavy chain. DAB2 and clathrin dissociate from SH3KBP1 following growth factor treatment, enabling interaction with CBL. Interacts with DDN and probably associates with MAGI2 through its interaction with DDN. Interacts with the SH3 domains of SRC tyrosine-protein kinases SRC, LCK, LYN, FGR, FYN and HCK. Interacts with TRADD, BIRC2, TRAF1, TRAF2 and TNFR1, and the association with a TNFR1-associated complex upon stimulation with TNF-alpha seems to be mediated by SRC. Interacts (via SH3 domains) with SHKBP1 (via PXXXPR motifs). Interaction with CBL is abolished in the presence of SHKBP1. Interacts (via SH3 domains) with ZFP36 (via extreme C-terminal region). Interacts with MAP3K4; this interaction enhances the association with ZFP36. (Microbial infection) Interacts (via SH3 domains) with Chikungunya virus non-structural protein 3 (via C-terminus); this interaction plays a role in initiation of viral replication. Post-translationally, monoubiquitinated by CBL and CBLB after EGF stimulation; probably on its C-terminus. As to expression, ubiquitously expressed. Also expressed in some cancer cell lines.

The protein resides in the cytoplasm. The protein localises to the cytoskeleton. Its subcellular location is the cytoplasmic vesicle membrane. It is found in the synapse. It localises to the synaptosome. The protein resides in the cell junction. The protein localises to the focal adhesion. In terms of biological role, adapter protein involved in regulating diverse signal transduction pathways. Involved in the regulation of endocytosis and lysosomal degradation of ligand-induced receptor tyrosine kinases, including EGFR and MET/hepatocyte growth factor receptor, through an association with CBL and endophilins. The association with CBL, and thus the receptor internalization, may be inhibited by an interaction with PDCD6IP and/or SPRY2. Involved in regulation of ligand-dependent endocytosis of the IgE receptor. Attenuates phosphatidylinositol 3-kinase activity by interaction with its regulatory subunit. May be involved in regulation of cell adhesion; promotes the interaction between TTK2B and PDCD6IP. May be involved in the regulation of cellular stress response via the MAPK pathways through its interaction with MAP3K4. Is involved in modulation of tumor necrosis factor mediated apoptosis. Plays a role in the regulation of cell morphology and cytoskeletal organization. Required in the control of cell shape and migration. Has an essential role in the stimulation of B cell activation. The protein is SH3 domain-containing kinase-binding protein 1 (SH3KBP1) of Homo sapiens (Human).